We begin with the raw amino-acid sequence, 459 residues long: MKVMKILLVLPPTESAIKRVVGTTGPPLGLAYLASMVREEHDVKIIDGLAEDLTFSDIAKIIKKFDPDIVGITATTSAMYDAYTVAKIAKNINENVFVVMGGPHVTFTPELTMRECPCIDAVVRGEGELTFKELVDALSKGRELKGILGLSYKENGKVRNEPPRPLIQNVDEIPIPSYDLLPMDKYKADGVPFGVVMTSRGCPFNCVFCSSSLQFGKRWRGHSVERVIEELSILHYEYGIKEIEFLDDTFTLNKKRAIDISLRIKQEGLDISWTASSRVNTFNEKVAKAMKEGGCHTVYFGIESASPRILEFIGKGITPQQSIDAVKTAKKFGLHALGSFIIGFPDETREEVEATIKFAKKLDIDYAQFTIATPYPGTRLWEYAIANNLLLTMNWRKYTTIDPVMKLKHFTSEQISKLLRKAYISFYLRPKVLIKDIFEHHGFIIKRAIRGLLRVYYQA.

The region spanning 13-145 (TESAIKRVVG…DALSKGRELK (133 aa)) is the B12-binding domain. Residues 188-402 (ADGVPFGVVM…MNWRKYTTID (215 aa)) enclose the Radical SAM core domain. Residues cysteine 202, cysteine 206, and cysteine 209 each contribute to the [4Fe-4S] cluster site.

The protein belongs to the methyltransferase superfamily. [4Fe-4S] cluster serves as cofactor.

This is an uncharacterized protein from Pyrococcus horikoshii (strain ATCC 700860 / DSM 12428 / JCM 9974 / NBRC 100139 / OT-3).